Reading from the N-terminus, the 298-residue chain is tRNA-cytidine(32) 2-sulfurtransferase (298 aa).

Positions 48-53 (SGGKDS) match the PP-loop motif motif. Residues Cys123, Cys126, and Cys214 each contribute to the [4Fe-4S] cluster site.

This sequence belongs to the TtcA family. Homodimer. The cofactor is Mg(2+). [4Fe-4S] cluster is required as a cofactor.

It localises to the cytoplasm. The enzyme catalyses cytidine(32) in tRNA + S-sulfanyl-L-cysteinyl-[cysteine desulfurase] + AH2 + ATP = 2-thiocytidine(32) in tRNA + L-cysteinyl-[cysteine desulfurase] + A + AMP + diphosphate + H(+). It functions in the pathway tRNA modification. In terms of biological role, catalyzes the ATP-dependent 2-thiolation of cytidine in position 32 of tRNA, to form 2-thiocytidine (s(2)C32). The sulfur atoms are provided by the cysteine/cysteine desulfurase (IscS) system. This chain is tRNA-cytidine(32) 2-sulfurtransferase, found in Nitrosospira multiformis (strain ATCC 25196 / NCIMB 11849 / C 71).